A 247-amino-acid chain; its full sequence is tRNA pseudouridine synthase A (247 aa).

Catalysis depends on Asp-52, which acts as the Nucleophile. Residue Tyr-113 coordinates substrate.

Belongs to the tRNA pseudouridine synthase TruA family. Homodimer.

The enzyme catalyses uridine(38/39/40) in tRNA = pseudouridine(38/39/40) in tRNA. Its function is as follows. Formation of pseudouridine at positions 38, 39 and 40 in the anticodon stem and loop of transfer RNAs. This Bartonella bacilliformis (strain ATCC 35685 / KC583 / Herrer 020/F12,63) protein is tRNA pseudouridine synthase A.